The chain runs to 305 residues: Dihydroorotate dehydrogenase A (fumarate) (305 aa).

Residues Ser-21 and 45-46 contribute to the FMN site; that span reads KS. Substrate is bound by residues Lys-45, 69–73, and Asn-129; that span reads NAIGL. Residue Asn-129 coordinates FMN. Cys-132 serves as the catalytic Nucleophile. Residues Lys-167 and Ile-193 each coordinate FMN. 194 to 195 lines the substrate pocket; that stretch reads NT. Residues Gly-219 and 245–246 each bind FMN; that span reads GG.

Belongs to the dihydroorotate dehydrogenase family. Type 1 subfamily. Homodimer. FMN serves as cofactor.

The protein localises to the cytoplasm. The catalysed reaction is (S)-dihydroorotate + fumarate = orotate + succinate. Its pathway is pyrimidine metabolism; UMP biosynthesis via de novo pathway. Functionally, catalyzes the conversion of dihydroorotate to orotate with fumarate as the electron acceptor. This chain is Dihydroorotate dehydrogenase A (fumarate) (pyrD), found in Lactiplantibacillus plantarum (strain ATCC BAA-793 / NCIMB 8826 / WCFS1) (Lactobacillus plantarum).